Consider the following 201-residue polypeptide: Superoxide dismutase [Mn] (201 aa).

Mn(2+)-binding residues include H27, H81, D163, and H167.

The protein belongs to the iron/manganese superoxide dismutase family. As to quaternary structure, homodimer. The cofactor is Mn(2+).

The protein resides in the secreted. It carries out the reaction 2 superoxide + 2 H(+) = H2O2 + O2. Functionally, destroys superoxide anion radicals which are normally produced within the cells and which are toxic to biological systems. The chain is Superoxide dismutase [Mn] (sodA) from Streptococcus pyogenes serotype M18 (strain MGAS8232).